Reading from the N-terminus, the 185-residue chain is Ribosome-recycling factor (185 aa).

This sequence belongs to the RRF family.

The protein localises to the cytoplasm. Responsible for the release of ribosomes from messenger RNA at the termination of protein biosynthesis. May increase the efficiency of translation by recycling ribosomes from one round of translation to another. The sequence is that of Ribosome-recycling factor from Pseudomonas putida (strain GB-1).